Reading from the N-terminus, the 196-residue chain is DnaA initiator-associating protein DiaA (196 aa).

The region spanning 34-196 (LVQSLLNGNK…DNTLFPHQDD (163 aa)) is the SIS domain.

It belongs to the SIS family. DiaA subfamily. As to quaternary structure, homotetramer; dimer of dimers.

Required for the timely initiation of chromosomal replication via direct interactions with the DnaA initiator protein. The sequence is that of DnaA initiator-associating protein DiaA from Shigella boydii serotype 18 (strain CDC 3083-94 / BS512).